The primary structure comprises 513 residues: Na(+)/H(+) antiporter NhaB (513 aa).

Helical transmembrane passes span 23–43 (LALIIFLIVNPLIFLISPFVA), 52–72 (IFTLAMALKCYPLLPGGLLAI), 97–117 (LLLMFMVAGIYFMKQLLLFIF), 120–140 (LLLSIRSKMLLSLSFCVAAAF), 144–164 (FLDALTVVAVVISVAVGFYGI), 202–222 (LMMHAGVGTALGGVMTMVGEP), 238–258 (FFLRMSPVTVPVLICGLLTCL), 303–323 (AIIGVWLVTALALHLAEVGLI), 348–368 (TESLPFTALLTVFFSVVAVII), 391–411 (LFYIFNGLLSSISDNVFVGTI), 447–467 (ATPNGQAAFLFLLTSALAPLI), and 475–495 (VWMALPYTLVLTLVGLLCVEF).

This sequence belongs to the NhaB Na(+)/H(+) (TC 2.A.34) antiporter family.

The protein resides in the cell inner membrane. It catalyses the reaction 2 Na(+)(in) + 3 H(+)(out) = 2 Na(+)(out) + 3 H(+)(in). Na(+)/H(+) antiporter that extrudes sodium in exchange for external protons. This chain is Na(+)/H(+) antiporter NhaB, found in Shigella sonnei (strain Ss046).